Consider the following 213-residue polypeptide: Succinate dehydrogenase subunit 3-1, mitochondrial (213 aa).

A mitochondrion-targeting transit peptide spans 1-105 (MAATALFRSI…LDVGTSKRLF (105 aa)). Histidine 130 is a heme binding site. A helical transmembrane segment spans residues 148 to 165 (ISGVYLTGVTFAGYLLYL).

As to quaternary structure, component of complex II composed of eight subunits in plants: four classical SDH subunits SDH1, SDH2, SDH3 and SDH4 (a flavoprotein (FP), an iron-sulfur protein (IP), and a cytochrome b composed of a large and a small subunit.), as well as four subunits unknown in mitochondria from bacteria and heterotrophic eukaryotes. The cofactor is heme. As to expression, expressed in flowers, inflorescences and stems.

The protein localises to the mitochondrion inner membrane. It functions in the pathway carbohydrate metabolism; tricarboxylic acid cycle. In terms of biological role, membrane-anchoring subunit of succinate dehydrogenase (SDH). In Arabidopsis thaliana (Mouse-ear cress), this protein is Succinate dehydrogenase subunit 3-1, mitochondrial.